Consider the following 250-residue polypeptide: Expansin-like B1 (250 aa).

The signal sequence occupies residues 1–24; that stretch reads MKHSHVLLLLFVQVIVLLPLLCLS. The 105-residue stretch at 45–149 folds into the Expansin-like EG45 domain; the sequence is RGHCGYGEFG…QRIPCRYAGY (105 aa). An N-linked (GlcNAc...) asparagine glycan is attached at Asn72. Residues 163 to 245 form the Expansin-like CBD domain; sequence HYLAILVLYV…DWTAGATYDS (83 aa).

This sequence belongs to the expansin family. Expansin-like B subfamily.

The protein resides in the secreted. The protein is Expansin-like B1 (EXLB1) of Arabidopsis thaliana (Mouse-ear cress).